The primary structure comprises 102 residues: Putative defensin-like protein 298 (102 aa).

A signal peptide spans 1–29 (MSASKATMLILFALFLSDILLVSIPRAEA). Intrachain disulfides connect C35-C53, C41-C58, C46-C60, C74-C93, C80-C98, and C86-C100.

Belongs to the DEFL family.

It is found in the secreted. This chain is Putative defensin-like protein 298, found in Arabidopsis thaliana (Mouse-ear cress).